The chain runs to 332 residues: DNA-directed RNA polymerase subunit alpha (332 aa).

Residues Met-1–Glu-231 form an alpha N-terminal domain (alpha-NTD) region. Positions Leu-262–Asn-332 are alpha C-terminal domain (alpha-CTD).

Belongs to the RNA polymerase alpha chain family. As to quaternary structure, in plastids the minimal PEP RNA polymerase catalytic core is composed of four subunits: alpha, beta, beta', and beta''. When a (nuclear-encoded) sigma factor is associated with the core the holoenzyme is formed, which can initiate transcription.

It is found in the plastid. It carries out the reaction RNA(n) + a ribonucleoside 5'-triphosphate = RNA(n+1) + diphosphate. DNA-dependent RNA polymerase catalyzes the transcription of DNA into RNA using the four ribonucleoside triphosphates as substrates. This Cuscuta japonica (Japanese dodder) protein is DNA-directed RNA polymerase subunit alpha.